Consider the following 400-residue polypeptide: MGAPLSTTRRGMGQNLSVPNPLGFLPDHQLDPLFRANSSSPDWDFNTNKDSWPMANKVGVGGYGPGFTPPHGGLLGWSPQAQGVLTTLPADPPPASTNRLSGRKPTQVSPPLRDTHPQAMQWNSTHFHQALLDPRVRALYFPAGGSSSGTQNPAPTIASLTSSISSKTGGPAMNMENITSGLLGPLRVLQAVCFLLTKILTIPQSLDSWWTSLNFLGGLPRCPGQNSQSPTSNHLPTSCPPTCPGYRWMCLRRFIIFLFILLLCLIFLLVLLDYQGMLPVCPLLPGSTTTSTGPCKTCTALAQGTSMFPSCCCSKPSDGNCTCIPIPSSWALGKYLWEWASARFSWLSLLVQFVQWCVGLSPTVWLLVIWMIWYWGPNLCSILSPFIPLLPIFCYLWVSI.

Methionine 1 carries the post-translational modification N-acetylmethionine. Glycine 2 carries N-myristoyl glycine; by host lipidation. The interval 2–119 is pre-S1; sequence GAPLSTTRRG…PPLRDTHPQA (118 aa). The segment at 2 to 174 is pre-S; it reads GAPLSTTRRG…SSKTGGPAMN (173 aa). The Virion surface; in external conformation portion of the chain corresponds to 2–181; the sequence is GAPLSTTRRG…AMNMENITSG (180 aa). Residues 2–253 are Intravirion; in internal conformation-facing; sequence GAPLSTTRRG…PGYRWMCLRR (252 aa). The N-linked (GlcNAc...) asparagine glycan is linked to proline 4. The interval 84 to 110 is disordered; that stretch reads VLTTLPADPPPASTNRLSGRKPTQVSP. The span at 96–109 shows a compositional bias: polar residues; that stretch reads STNRLSGRKPTQVS. Residues 120–174 form a pre-S2 region; sequence MQWNSTHFHQALLDPRVRALYFPAGGSSSGTQNPAPTIASLTSSISSKTGGPAMN. Residues 182 to 202 form a helical membrane-spanning segment; it reads LLGPLRVLQAVCFLLTKILTI. The Intravirion; in external conformation segment spans residues 203-253; sequence PQSLDSWWTSLNFLGGLPRCPGQNSQSPTSNHLPTSCPPTCPGYRWMCLRR. The helical transmembrane segment at 254 to 274 threads the bilayer; the sequence is FIIFLFILLLCLIFLLVLLDY. Residues 275 to 348 are Virion surface-facing; it reads QGMLPVCPLL…WASARFSWLS (74 aa). Residue asparagine 320 is glycosylated (N-linked (GlcNAc...) asparagine; by host). The chain crosses the membrane as a helical span at residues 349-369; the sequence is LLVQFVQWCVGLSPTVWLLVI. The Intravirion segment spans residues 370-375; that stretch reads WMIWYW. The helical transmembrane segment at 376-398 threads the bilayer; the sequence is GPNLCSILSPFIPLLPIFCYLWV. Residues 399–400 are Virion surface-facing; sequence SI.

It belongs to the orthohepadnavirus major surface antigen family. In its internal form (Li-HBsAg), interacts with the capsid protein and with the isoform S. Interacts with host chaperone CANX. As to quaternary structure, associates with host chaperone CANX through its pre-S2 N glycan; this association may be essential for isoform M proper secretion. In terms of assembly, interacts with isoform L. Interacts with the antigens of satellite virus HDV (HDVAgs); this interaction is required for encapsidation of HDV genomic RNA. Post-translationally, isoform M is N-terminally acetylated by host at a ratio of 90%, and N-glycosylated by host at the pre-S2 region. Myristoylated.

It is found in the virion membrane. Functionally, the large envelope protein exists in two topological conformations, one which is termed 'external' or Le-HBsAg and the other 'internal' or Li-HBsAg. In its external conformation the protein attaches the virus to cell receptors and thereby initiating infection. This interaction determines the species specificity and liver tropism. This attachment induces virion internalization predominantly through caveolin-mediated endocytosis. The large envelope protein also assures fusion between virion membrane and endosomal membrane. In its internal conformation the protein plays a role in virion morphogenesis and mediates the contact with the nucleocapsid like a matrix protein. Its function is as follows. The middle envelope protein plays an important role in the budding of the virion. It is involved in the induction of budding in a nucleocapsid independent way. In this process the majority of envelope proteins bud to form subviral lipoprotein particles of 22 nm of diameter that do not contain a nucleocapsid. The protein is Large envelope protein of Homo sapiens (Human).